A 228-amino-acid chain; its full sequence is Trichome differentiation protein GL1 (228 aa).

HTH myb-type domains are found at residues 11-63 (NQEY…MNYL) and 64-118 (SPNV…SKKL). 2 DNA-binding regions (H-T-H motif) span residues 39 to 63 (WNRI…MNYL) and 91 to 114 (WSLI…NTHL).

As to quaternary structure, homodimer and heterodimer with MYB82. Interacts directly with GL3 and BHLH2. Part of a complex made of GL1, GL3 or BHLH2, and TTG1. Also interacts with BHLH2/EGL3/MYC146 and BHLH12/MYC1. Interacts with MYB82. As to expression, expressed in leaves, stems and flowers. Expressed in trichome cells and in leaf primordia.

Its subcellular location is the nucleus. In terms of biological role, transcription activator, when associated with BHLH2/EGL3/MYC146 or BHLH12/MYC1. Involved in epidermal cell fate specification in leaves. Together with TTG1 and GL3, promotes trichome formation and endoreplication. Regulates the production of a signal that induces hair (trichome) precursor cells on leaf primordia to differentiate. Binds to the WER-binding sites (WBS) promoter regions and activates the transcription of target genes. This chain is Trichome differentiation protein GL1, found in Arabidopsis thaliana (Mouse-ear cress).